The sequence spans 122 residues: Large ribosomal subunit protein uL14c (122 aa).

This sequence belongs to the universal ribosomal protein uL14 family. As to quaternary structure, part of the 50S ribosomal subunit.

The protein resides in the plastid. It localises to the chloroplast. In terms of biological role, binds to 23S rRNA. This Fagopyrum esculentum subsp. ancestrale (Wild buckwheat) protein is Large ribosomal subunit protein uL14c.